A 330-amino-acid chain; its full sequence is Catharanthine synthase (330 aa).

Positions 81–83 match the Involved in the stabilization of the negatively charged intermediate by the formation of the oxyanion hole motif; it reads HGA. Position 84 (Gly84) interacts with catharanthine. Residue Ser173 is the Proton acceptor of the active site. Residue Asp274 is part of the active site. A catharanthine-binding site is contributed by Tyr305. Tyr305 (proton donor/acceptor) is an active-site residue.

This sequence belongs to the 'GDXG' lipolytic enzyme family. Interacts with dehydroprecondylocarpine acetate synthase (DPAS). In terms of tissue distribution, expressed in leaf epidermis.

Its subcellular location is the cytoplasm. The protein localises to the cytosol. It localises to the nucleus. The catalysed reaction is dehydrosecodine = catharanthine. Its pathway is alkaloid biosynthesis. Its function is as follows. Component of iboga and aspidosperma monoterpenoid indole alkaloids (MIAs, e.g. tabersonine and catharanthine) biosynthesis pathway from 19E-geissoschizine, psychoactive compounds likely to be used in the treatment of opioid dependence. Catalyzes the conversion of dehydrosecodine to catharanthine. This Catharanthus roseus (Madagascar periwinkle) protein is Catharanthine synthase.